Reading from the N-terminus, the 192-residue chain is Elongation factor P (192 aa).

This sequence belongs to the elongation factor P family.

It localises to the cytoplasm. The protein operates within protein biosynthesis; polypeptide chain elongation. Involved in peptide bond synthesis. Stimulates efficient translation and peptide-bond synthesis on native or reconstituted 70S ribosomes in vitro. Probably functions indirectly by altering the affinity of the ribosome for aminoacyl-tRNA, thus increasing their reactivity as acceptors for peptidyl transferase. This is Elongation factor P (efp) from Aquifex aeolicus (strain VF5).